Here is a 157-residue protein sequence, read N- to C-terminus: Large ribosomal subunit protein uL15 (157 aa).

The interval 1–56 is disordered; the sequence is MRLEDIRPQPGSTRRRRRLGRGIAAGQGASCGKGMRGQKARKGGGPRPGFEGGQTP. The span at 23–35 shows a compositional bias: gly residues; that stretch reads IAAGQGASCGKGM.

It belongs to the universal ribosomal protein uL15 family. As to quaternary structure, part of the 50S ribosomal subunit.

In terms of biological role, binds to the 23S rRNA. This Synechococcus sp. (strain JA-3-3Ab) (Cyanobacteria bacterium Yellowstone A-Prime) protein is Large ribosomal subunit protein uL15.